Consider the following 266-residue polypeptide: NAD kinase 2 (266 aa).

Asp51 acts as the Proton acceptor in catalysis. NAD(+) contacts are provided by residues 51-52 (DG), 123-124 (NE), Arg150, Asp152, 163-168 (TGYSKS), and Ala187.

The protein belongs to the NAD kinase family. A divalent metal cation is required as a cofactor.

The protein resides in the cytoplasm. The catalysed reaction is NAD(+) + ATP = ADP + NADP(+) + H(+). Involved in the regulation of the intracellular balance of NAD and NADP, and is a key enzyme in the biosynthesis of NADP. Catalyzes specifically the phosphorylation on 2'-hydroxyl of the adenosine moiety of NAD to yield NADP. The protein is NAD kinase 2 of Oceanobacillus iheyensis (strain DSM 14371 / CIP 107618 / JCM 11309 / KCTC 3954 / HTE831).